The following is a 406-amino-acid chain: Arginine deiminase (406 aa).

Cysteine 396 functions as the Amidino-cysteine intermediate in the catalytic mechanism.

The protein belongs to the arginine deiminase family.

It is found in the cytoplasm. The enzyme catalyses L-arginine + H2O = L-citrulline + NH4(+). It participates in amino-acid degradation; L-arginine degradation via ADI pathway; carbamoyl phosphate from L-arginine: step 1/2. The chain is Arginine deiminase from Aliivibrio salmonicida (strain LFI1238) (Vibrio salmonicida (strain LFI1238)).